The primary structure comprises 373 residues: MHNSAPITRRKSKRIYVGKVLVGDGAPIAVQSMTNTCTTDVAATVQQIQALERVGVDIVRVSVPTMDAAEAFKLIKQQVAVPLVADIHFDYRIALKVAEYGVDCLRINPGNIGNEGRIRSVVDCARDNNIPIRIGVNAGSLERDLQEKYGEPTPEALLESAMRHVDILDRLNFDTFKVSVKASDVFLAVQSYRLLASRIDQPLHLGITEAGGARSGAVKSAIGLGLLLSEGIGDTLRISLAADPVEEVKVGFDILKSLRIRARGINFIACPTCSRQEFDVIGTVNALEQRLEDIVTPMDVSIIGCVVNGPGEALVSTLGVTGGHNKSGYYEDGVRQRERFDNELMIDQLEARIRAKAAMLDENNRITVNLIEK.

The [4Fe-4S] cluster site is built by cysteine 270, cysteine 273, cysteine 305, and glutamate 312.

It belongs to the IspG family. [4Fe-4S] cluster is required as a cofactor.

The catalysed reaction is (2E)-4-hydroxy-3-methylbut-2-enyl diphosphate + oxidized [flavodoxin] + H2O + 2 H(+) = 2-C-methyl-D-erythritol 2,4-cyclic diphosphate + reduced [flavodoxin]. Its pathway is isoprenoid biosynthesis; isopentenyl diphosphate biosynthesis via DXP pathway; isopentenyl diphosphate from 1-deoxy-D-xylulose 5-phosphate: step 5/6. Its function is as follows. Converts 2C-methyl-D-erythritol 2,4-cyclodiphosphate (ME-2,4cPP) into 1-hydroxy-2-methyl-2-(E)-butenyl 4-diphosphate. This Sodalis glossinidius (strain morsitans) protein is 4-hydroxy-3-methylbut-2-en-1-yl diphosphate synthase (flavodoxin).